The sequence spans 470 residues: Neuraminidase (470 aa).

At 1-14 (MNPNQKIITIGSVS) the chain is on the intravirion side. An involved in apical transport and lipid raft association region spans residues 11 to 32 (GSVSLGLVVLNILLHIVSITIT). The helical transmembrane segment at 15 to 35 (LGLVVLNILLHIVSITITVLV) threads the bilayer. The hypervariable stalk region stretch occupies residues 32-86 (TVLVLPGNGNNGSCNETVIREYNETVRIEKIIQWHNTNVIEYIERPESDHFMNNT). Topologically, residues 36–470 (LPGNGNNGSC…AILPFDIDKM (435 aa)) are virion surface. N42, N46, N54, and N84 each carry an N-linked (GlcNAc...) asparagine; by host glycan. The tract at residues 89–470 (LCDAKGFAPF…AILPFDIDKM (382 aa)) is head of neuraminidase. Disulfide bonds link C90-C417, C122-C127, C182-C229, C231-C236, C277-C290, C279-C288, C316-C335, and C421-C446. Residue R116 participates in substrate binding. An N-linked (GlcNAc...) asparagine; by host glycan is attached at N144. Catalysis depends on D149, which acts as the Proton donor/acceptor. R150 provides a ligand contact to substrate. 275–276 (EE) lines the substrate pocket. R291 is a binding site for substrate. D292 is a binding site for Ca(2+). An N-linked (GlcNAc...) asparagine; by host glycan is attached at N293. Residues G296 and D322 each contribute to the Ca(2+) site. R368 contacts substrate. N398 carries an N-linked (GlcNAc...) asparagine; by host glycan. The Nucleophile role is filled by Y402.

Belongs to the glycosyl hydrolase 34 family. Homotetramer. It depends on Ca(2+) as a cofactor. In terms of processing, N-glycosylated.

The protein resides in the virion membrane. The protein localises to the host apical cell membrane. The enzyme catalyses Hydrolysis of alpha-(2-&gt;3)-, alpha-(2-&gt;6)-, alpha-(2-&gt;8)- glycosidic linkages of terminal sialic acid residues in oligosaccharides, glycoproteins, glycolipids, colominic acid and synthetic substrates.. With respect to regulation, inhibited by the neuraminidase inhibitors zanamivir (Relenza) and oseltamivir (Tamiflu). These drugs interfere with the release of progeny virus from infected cells and are effective against all influenza strains. Resistance to neuraminidase inhibitors is quite rare. Functionally, catalyzes the removal of terminal sialic acid residues from viral and cellular glycoconjugates. Cleaves off the terminal sialic acids on the glycosylated HA during virus budding to facilitate virus release. Additionally helps virus spread through the circulation by further removing sialic acids from the cell surface. These cleavages prevent self-aggregation and ensure the efficient spread of the progeny virus from cell to cell. Otherwise, infection would be limited to one round of replication. Described as a receptor-destroying enzyme because it cleaves a terminal sialic acid from the cellular receptors. May facilitate viral invasion of the upper airways by cleaving the sialic acid moieties on the mucin of the airway epithelial cells. Likely to plays a role in the budding process through its association with lipid rafts during intracellular transport. May additionally display a raft-association independent effect on budding. Plays a role in the determination of host range restriction on replication and virulence. Sialidase activity in late endosome/lysosome traffic seems to enhance virus replication. The sequence is that of Neuraminidase from Influenza A virus (strain A/Turkey/Canada/1963 H6N8).